Consider the following 844-residue polypeptide: Leucine--tRNA ligase (844 aa).

Positions 39–49 match the 'HIGH' region motif; sequence PYPSGRIHMGH. A 'KMSKS' region motif is present at residues 621–625; that stretch reads KMSKS. Lysine 624 serves as a coordination point for ATP.

The protein belongs to the class-I aminoacyl-tRNA synthetase family.

The protein localises to the cytoplasm. It catalyses the reaction tRNA(Leu) + L-leucine + ATP = L-leucyl-tRNA(Leu) + AMP + diphosphate. This is Leucine--tRNA ligase from Paracoccus denitrificans (strain Pd 1222).